Consider the following 449-residue polypeptide: Probable mitochondrial chaperone bcs1 (449 aa).

Residues Met-1–Ser-20 are Mitochondrial intermembrane-facing. A helical transmembrane segment spans residues Gly-21–Leu-41. Topologically, residues Arg-42–Val-449 are mitochondrial matrix. Residue Gly-249–Thr-256 participates in ATP binding.

This sequence belongs to the AAA ATPase family. BCS1 subfamily.

It localises to the mitochondrion inner membrane. The catalysed reaction is ATP + H2O = ADP + phosphate + H(+). Chaperone necessary for the incorporation of Rieske iron-sulfur protein rip1 into the mitochondrial respiratory chain complex III. This chain is Probable mitochondrial chaperone bcs1, found in Schizosaccharomyces pombe (strain 972 / ATCC 24843) (Fission yeast).